Here is a 265-residue protein sequence, read N- to C-terminus: Small ribosomal subunit protein uS5 (265 aa).

Positions Met1–Arg25 are enriched in low complexity. The interval Met1–Trp49 is disordered. Ala2 is subject to N-acetylalanine. One can recognise an S5 DRBM domain in the interval Leu89 to Val152.

Belongs to the universal ribosomal protein uS5 family.

Its function is as follows. Component of the ribosome, a large ribonucleoprotein complex responsible for the synthesis of proteins in the cell. The small ribosomal subunit (SSU) binds messenger RNAs (mRNAs) and translates the encoded message by selecting cognate aminoacyl-transfer RNA (tRNA) molecules. The large subunit (LSU) contains the ribosomal catalytic site termed the peptidyl transferase center (PTC), which catalyzes the formation of peptide bonds, thereby polymerizing the amino acids delivered by tRNAs into a polypeptide chain. The nascent polypeptides leave the ribosome through a tunnel in the LSU and interact with protein factors that function in enzymatic processing, targeting, and the membrane insertion of nascent chains at the exit of the ribosomal tunnel. Plays a role in the assembly and function of the 40S ribosomal subunit. Mutations in this protein affects the control of translational fidelity. Involved in nucleolar processing of pre-18S ribosomal RNA and ribosome assembly. This chain is Small ribosomal subunit protein uS5 (rps2), found in Dictyostelium discoideum (Social amoeba).